Reading from the N-terminus, the 721-residue chain is MVPLTFLRTKASRSLPIMLAALIFAGCGTQAPDQTAAHMQGSAQADSGFYLQQMSQSSNDTKTNWQLLAIRALLNEGKTQQAVDLYNQLPQELNNTQRGEQSLLAAELKIAQKEYPAAKKLLADIDTKALENNQQARYWQAVIAAEQGRPSLPLLRALIAQEPLLSGADKQKNIDTTWQALSSMTPEQSQALVINADENVLQGWLDLQQMWFNNRSDPKMLKAGITDWQTRYPQNPGAKMLPTQLVNVQNFQPASVSKIALLLPLNGQAAVFGRTIQQGFEAAKNGTTAVAGNAVPAQAAQAANVNDVISPSAVETSDLTSAQAPAQGTMQNPVTAPTTPPATTQAPAETAAPAEAQTPVVPQAAPATDAATAQPQTTTPDQQPAAQPQAVAATTANPGAELKIYDTSSQPLDQVLAQVQKDGASIVVGPLLKNNVEELMKSNTSLNVLALNQPEQVQNRANICYFALSPEDEARDAARHIHEQGKQAPLLLTPRSALGDRVATAFAQEWQQLGGNIVLQQKFGSTSELRAGVNGGSGIALTGSPVSASLPQQQGVTIGGLTIPAPPTDAQISGGGKVDAAYIVATPEEIAFIKPMIAMRNGSQSGVTLYASSRSAQGTAGPDFRLEMDGLQYSEIPMLAGSNPALMQQALSSVRNDYSLARLYAMGVDAWALANHFTQMRQVPGFELNGNTGDLTATQDCVINRKLSWLKYQQGQIVPAS.

An N-terminal signal peptide occupies residues 1-26 (MVPLTFLRTKASRSLPIMLAALIFAG). C27 is lipidated: N-palmitoyl cysteine. C27 carries S-diacylglycerol cysteine lipidation. Residues 316–330 (TSDLTSAQAPAQGTM) are compositionally biased toward polar residues. A disordered region spans residues 316-393 (TSDLTSAQAP…PAAQPQAVAA (78 aa)). Residues 331-393 (QNPVTAPTTP…PAAQPQAVAA (63 aa)) are compositionally biased toward low complexity.

It belongs to the LpoA family. In terms of assembly, interacts with PBP1a.

The protein localises to the cell outer membrane. Its function is as follows. Regulator of peptidoglycan synthesis that is essential for the function of penicillin-binding protein 1A (PBP1a). This is Penicillin-binding protein activator LpoA from Enterobacter sp. (strain 638).